The chain runs to 467 residues: uncharacterized protein (467 aa).

Sel1-like repeat units lie at residues 38–73 (PAAAFELAKHLMDADSPYQDREQGMEMLRIAAEQGH), 107–138 (PEAQVRLMYLLYASRHFEEALEWAKTSAKNNN), 139–172 (PHGQYLLAQYCRYGTPPDFETAHLLYRKSAAQGL), 173–208 (PEAHWQLGLQYRFGQGTKVDTAQAVNHLRAAAQQGY), 240–275 (PDAHAALADIYLQGKHLERNHKLALHHAEAAAAERH), 276–311 (PEGLRILGDICRYGLGIAPDTEKARHYYRQAAEAGS), 343–378 (AERLYQKAQALHYGLQCAPEYAAALKLYTEAAELGH), 379–414 (SKAQTNLGSMYYFGQGMTADYNEARKWFEKAAAKKD), and 415–450 (SMAFYNLACIHYSGHGVEPDKEKACRYLQEAINNGY).

This is an uncharacterized protein from Neisseria meningitidis serogroup B (strain ATCC BAA-335 / MC58).